The sequence spans 252 residues: Putative phosphonates utilization ATP-binding protein PhnK (252 aa).

Residues 6 to 246 (LSVNNLTHLY…PHHPYTQLLV (241 aa)) enclose the ABC transporter domain. ATP is bound at residue 38–45 (GESGSGKT).

It belongs to the ABC transporter superfamily. As to quaternary structure, forms a complex with PhnG, PhnH, PhnI and PhnJ with the suggested composition PhnG(4)H(2)I(2)J(2)K.

Its function is as follows. Belongs to an operon involved in alkylphosphonate uptake and C-P lyase. Exact function not known. PhnK is not required for the ribophosphonate triphosphate (RPnTP) synthase reaction. The chain is Putative phosphonates utilization ATP-binding protein PhnK (phnK) from Escherichia coli (strain K12).